The chain runs to 610 residues: Sensor protein kinase WalK (610 aa).

Transmembrane regions (helical) follow at residues 14 to 34 (LVIV…LYFT) and 184 to 204 (IFIV…FFIA). The HAMP domain occupies 205 to 257 (RTITKPITDMRNQTVEMSKGNYTQRVKIYGNDEIGELALAFNNLSKRVQEAQA). The region spanning 262–333 (EKRRLDSVIT…IQENNDSFLL (72 aa)) is the PAS domain. The 54-residue stretch at 326–379 (ENNDSFLLDINENEGIIARVNFSTIVQETGFVTGYIAVLHDVTEQQQVERERRE) folds into the PAC domain. A Histidine kinase domain is found at 383–601 (NVSHELRTPL…SIFITLPCEV (219 aa)). A Phosphohistidine; by autocatalysis modification is found at histidine 386.

Autophosphorylated.

The protein localises to the cell membrane. The enzyme catalyses ATP + protein L-histidine = ADP + protein N-phospho-L-histidine.. Member of the two-component regulatory system WalK/WalR. WalK functions as a sensor protein kinase which is autophosphorylated at a histidine residue and transfers its phosphate group to WalR. This Staphylococcus saprophyticus subsp. saprophyticus (strain ATCC 15305 / DSM 20229 / NCIMB 8711 / NCTC 7292 / S-41) protein is Sensor protein kinase WalK (walK).